The following is a 383-amino-acid chain: Forkhead box protein I3-B (383 aa).

Residues methionine 1–threonine 12 show a composition bias toward polar residues. Disordered stretches follow at residues methionine 1–glycine 55, aspartate 215–serine 277, and threonine 317–histidine 348. Low complexity predominate over residues proline 25–tyrosine 35. A DNA-binding region (fork-head) is located at residues arginine 130–lysine 224. The Nuclear localization signal signature appears at arginine 220–lysine 226. Positions serine 234–serine 249 are enriched in low complexity. A compositionally biased stretch (polar residues) spans proline 250–serine 277. Residues threonine 317–serine 330 show a composition bias toward low complexity.

As to expression, expressed in ionocyte precursors.

Its subcellular location is the nucleus. Transcription factor required for epithelial cell differentiation. Involved in specification of skin ionocytes from epidermal precursors. The sequence is that of Forkhead box protein I3-B from Danio rerio (Zebrafish).